An 889-amino-acid chain; its full sequence is F-BAR domain only protein 1 (889 aa).

One can recognise an F-BAR domain in the interval 1 to 248; that stretch reads MSYFGEHFWG…NIENVSVEML (248 aa). The tract at residues 1 to 275 is mediates membrane-binding; it reads MSYFGEHFWG…LDFEAYSAAA (275 aa). The stretch at 156-195 forms a coiled coil; the sequence is TSQKEMDKAETKTKKAAESLRRSVEKYNSARADFEQKMLD. The segment at 267–442 is mediates interaction with the adaptor protein complex AP-2; it reads DFEAYSAAAL…KNLFGPPLES (176 aa). A disordered region spans residues 294–352; it reads LSRREREPEPPAAVDFLEPDSGTCPEVDEEGFTVRPDVTQNSTAEPSRFSSSDSDFDDE. Residues Ser295, Ser347, and Ser372 each carry the phosphoserine modification. The disordered stretch occupies residues 382-596; that stretch reads ATAGSLILPP…SPLGSSAAST (215 aa). Over residues 450–469 the composition is skewed to low complexity; the sequence is TGSSSLGFTSSPSPFSSSSP. Pro residues predominate over residues 496 to 511; sequence PGTPQSPPSCRAPPPE. Phosphoserine is present on Ser530. Over residues 580–596 the composition is skewed to low complexity; that stretch reads LSRSLSPSPLGSSAAST. The mediates interaction with AGFG1, CALM, DAB2, EPS15, EPS15R, ITSN1 and clathrin stretch occupies residues 609 to 889; sequence HGVSRGPSPV…FATGMYLVSC (281 aa). A Phosphoserine modification is found at Ser616. Residues 625-888 enclose the MHD domain; it reads ALPIATAFTE…RFATGMYLVS (264 aa). The tract at residues 826–849 is disordered; sequence AGGSGRLSASWEPLSGPSTPSPVA.

This sequence belongs to the FCHO family. May oligomerize and form homotetramer. Interacts with AP2A2 and AP2B1; 2 subunits of the adaptor protein complex AP-2. Interacts with DAB2. Interacts with clathrin (CLTC or CLTCL1). Interacts with EPS15, EPS15R and ITSN1. Interacts with AGFG1 and CALM. May interact with ACVR1; linking this receptor to clathrin-mediated endocytosis. As to expression, predominantly expressed in lymphoid cells.

It localises to the membrane. Its subcellular location is the clathrin-coated pit. Functions in an early step of clathrin-mediated endocytosis. Has both a membrane binding/bending activity and the ability to recruit proteins essential to the formation of functional clathrin-coated pits. May regulate Bmp signaling by regulating clathrin-mediated endocytosis of Bmp receptors. Involved in the regulation of T-cell poliferation and activation. Affects TCR clustering upon receptor triggering and modulates its internalisation, playing a role in TCR-dependent T-cell activation. This chain is F-BAR domain only protein 1, found in Homo sapiens (Human).